The sequence spans 321 residues: tRNA(Ile)-lysidine synthase (321 aa).

Position 30–35 (30–35 (SGGSDS)) interacts with ATP.

Belongs to the tRNA(Ile)-lysidine synthase family.

Its subcellular location is the cytoplasm. The enzyme catalyses cytidine(34) in tRNA(Ile2) + L-lysine + ATP = lysidine(34) in tRNA(Ile2) + AMP + diphosphate + H(+). Functionally, ligates lysine onto the cytidine present at position 34 of the AUA codon-specific tRNA(Ile) that contains the anticodon CAU, in an ATP-dependent manner. Cytidine is converted to lysidine, thus changing the amino acid specificity of the tRNA from methionine to isoleucine. This chain is tRNA(Ile)-lysidine synthase, found in Chlamydia trachomatis serovar D (strain ATCC VR-885 / DSM 19411 / UW-3/Cx).